Consider the following 662-residue polypeptide: Polyunsaturated fatty acid lipoxygenase ALOX15 (662 aa).

A PLAT domain is found at 2-114; the sequence is GLYRIRVSTG…VLSLPEGTGR (113 aa). In terms of domain architecture, Lipoxygenase spans 115-662; the sequence is TVGEDPQGLF…PSVVENSVAI (548 aa). Residues histidine 360, histidine 365, histidine 540, histidine 544, and isoleucine 662 each coordinate Fe cation.

The protein belongs to the lipoxygenase family. As to quaternary structure, interacts with PEBP1; in response to IL13/interleukin-13, prevents the interaction of PEBP1 with RAF1 to activate the ERK signaling cascade. Fe cation is required as a cofactor. As to expression, detected in monocytes and eosinophils (at protein level). Expressed in airway epithelial cells.

It is found in the cytoplasm. It localises to the cytosol. The protein localises to the cell membrane. Its subcellular location is the lipid droplet. The enzyme catalyses (5Z,8Z,11Z,14Z)-eicosatetraenoate + O2 = (12S)-hydroperoxy-(5Z,8Z,10E,14Z)-eicosatetraenoate. It catalyses the reaction (5Z,8Z,11Z,14Z)-eicosatetraenoate + O2 = (15S)-hydroperoxy-(5Z,8Z,11Z,13E)-eicosatetraenoate. It carries out the reaction (9Z,12Z)-octadecadienoate + O2 = (13S)-hydroperoxy-(9Z,11E)-octadecadienoate. The catalysed reaction is (5Z,8Z,11Z,14Z)-eicosatetraenoate + 2 O2 = (14R,15S)-dihydroperoxy-(5Z,8Z,10E,12E)-eicosatetraenoate. The enzyme catalyses (5Z,8Z,11Z,14Z)-eicosatetraenoate + 2 O2 = (8S,15S)-dihydroperoxy-(5Z,9E,11Z,13E)-eicosatetraenoate. It catalyses the reaction (14S,15R)-epoxy-(5Z,8Z,11Z)-eicosatrienoate + O2 = (8S)-hydroperoxy-(14S,15R)-epoxy-(5Z,9E,11Z)-eicosatrienoate. It carries out the reaction (14S,15R)-epoxy-(5Z,8Z,11Z)-eicosatrienoate + O2 = (12S)-hydroperoxy-(14S,15R)-epoxy-(5Z,8Z,10E)-eicosatrienoate. The catalysed reaction is (14R,15S)-epoxy-(5Z,8Z,11Z)-eicosatrienoate + O2 = (5S)-hydroperoxy-(14R,15S)-epoxy-(6E,8Z,11Z)-eicosatrienoate. The enzyme catalyses (14R,15S)-epoxy-(5Z,8Z,11Z)-eicosatrienoate + O2 = (12S)-hydroperoxy-(14R,15S)-epoxy-(5Z,8Z,10E)-eicosatrienoate. It catalyses the reaction (15R)-hydroperoxy-(5Z,8Z,11Z,13E)-eicosatetraenoate = 15-oxo-(5Z,8Z,11Z,13E)-eicosatetraenoate + H2O. It carries out the reaction (15S)-hydroperoxy-(5Z,8Z,11Z,13E)-eicosatetraenoate = (14S,15S)-epoxy-(5Z,8Z,10E,12E)-eicosatetraenoate + H2O. The catalysed reaction is (12S)-hydroperoxy-(5Z,8Z,10E,14Z)-eicosatetraenoate = (8S)-hydroxy-(11S,12S)-epoxy-(5Z,9E,14Z)-eicosatrienoate. The enzyme catalyses (4Z,7Z,10Z,13Z,16Z,19Z)-docosahexaenoate + O2 = (14S)-hydroperoxy-(4Z,7Z,10Z,12E,16Z,19Z)-docosahexaenoate. It catalyses the reaction (4Z,7Z,10Z,13Z,16Z,19Z)-docosahexaenoate + O2 = (17S)-hydroperoxy-(4Z,7Z,10Z,13Z,15E,19Z)-docosahexaenoate. It carries out the reaction (7S)-hydroperoxy-(4Z,8E,10Z,13Z,16Z,19Z)-docosahexaenoate + O2 = (7S,14S)-dihydroperoxy-(4Z,8E,10Z,12E,16Z,19Z)-docosahexaenoate. The catalysed reaction is (7S)-hydroperoxy-(4Z,8E,10Z,13Z,16Z,19Z)-docosahexaenoate + O2 = (7S,17S)-dihydroperoxy-(4Z,8E,10Z,13Z,15E,19Z)-docosahexaenoate. The enzyme catalyses (4Z,7Z,10Z,13Z,16Z,19Z)-docosahexaenoate + O2 = (11S)-hydroperoxy-(4Z,7Z,9E,13Z,16Z,19Z)-docosahexaenoate. It catalyses the reaction (7Z,10Z,13Z,16Z,19Z)-docosapentaenoate + O2 = 14-hydroperoxy-(7Z,10Z,12E,16Z,19Z)-docosapentaenoate. It carries out the reaction (4Z,7Z,10Z,13Z,16Z)-docosapentaenoate + O2 = 14-hydroperoxy-(4Z,7Z,10Z,12E,16Z)-docosapentaenoate. The catalysed reaction is N-(5Z,8Z,11Z,14Z)-eicosatetraenoyl-taurine + O2 = N-(12S)-hydroperoxy-(5Z,8Z,10E,14Z)-eicosatetraenoyl-taurine. The enzyme catalyses N-(5Z,8Z,11Z,14Z)-eicosatetraenoyl-gamma-aminobutanoate + O2 = N-(12S)-hydroperoxy-(5Z,8Z,10E,14Z)-eicosatetraenoyl-gamma-aminobutanoate. It catalyses the reaction N-(5Z,8Z,11Z,14Z)-eicosatetraenoyl-glycine + O2 = N-(12S)-hydroperoxy-(5Z,8Z,10E,14Z)-eicosatetraenoyl-glycine. It carries out the reaction N-(5Z,8Z,11Z,14Z)-eicosatetraenoyl-L-alanine + O2 = N-(12S)-hydroperoxy-(5Z,8Z,10E,14Z)-eicosatetraenoyl-alanine. The catalysed reaction is N-(5Z,8Z,11Z,14Z)-eicosatetraenoyl-taurine + O2 = N-(15S)-hydroperoxy-(5Z,8Z,11Z,13E)-eicosatetraenoyl-taurine. The enzyme catalyses N-(5Z,8Z,11Z,14Z)-eicosatetraenoyl-gamma-aminobutanoate + O2 = N-(15S)-hydroperoxy-(5Z,8Z,11Z,13E)-eicosatetraenoyl-gamma-aminobutanoate. It catalyses the reaction N-(5Z,8Z,11Z,14Z)-eicosatetraenoyl-glycine + O2 = N-(15S)-hydroperoxy-(5Z,8Z,11Z,13E)-eicosatetraenoyl-glycine. It carries out the reaction N-(5Z,8Z,11Z,14Z)-eicosatetraenoyl-L-alanine + O2 = N-(15S)-hydroperoxy-(5Z,8Z,11Z,13E)-eicosatetraenoyl-alanine. It functions in the pathway lipid metabolism; hydroperoxy eicosatetraenoic acid biosynthesis. Activity is increased by binding phosphatidylinositol phosphates, especially phosphatidylinositol 3,4-bisphosphate and phosphatidylinositol 4,5-bisphosphate. Inactivated at 37 degrees Celsius by (13S)-hydroperoxy-(9Z,11E)-octadecadienoate. Non-heme iron-containing dioxygenase that catalyzes the stereo-specific peroxidation of free and esterified polyunsaturated fatty acids generating a spectrum of bioactive lipid mediators. It inserts peroxyl groups at C12 or C15 of arachidonate ((5Z,8Z,11Z,14Z)-eicosatetraenoate) producing both 12-hydroperoxyeicosatetraenoate/12-HPETE and 15-hydroperoxyeicosatetraenoate/15-HPETE. It may then act on 12-HPETE to produce hepoxilins, which may show pro-inflammatory properties. Can also peroxidize linoleate ((9Z,12Z)-octadecadienoate) to 13-hydroperoxyoctadecadienoate/13-HPODE. May participate in the sequential oxidations of DHA ((4Z,7Z,10Z,13Z,16Z,19Z)-docosahexaenoate) to generate specialized pro-resolving mediators (SPMs)like resolvin D5 ((7S,17S)-diHPDHA) and (7S,14S)-diHPDHA, that actively down-regulate the immune response and have anti-aggregation properties with platelets. Can convert epoxy fatty acids to hydroperoxy-epoxides derivatives followed by an intramolecular nucleophilic substitution leading to the formation of monocyclic endoperoxides. Plays an important role during the maintenance of self-tolerance by peroxidizing membrane-bound phosphatidylethanolamine which can then signal the sorting process for clearance of apoptotic cells during inflammation and prevent an autoimmune response. In addition to its role in the immune and inflammatory responses, this enzyme may play a role in epithelial wound healing in the cornea through production of lipoxin A4 (LXA(4)) and docosahexaenoic acid-derived neuroprotectin D1 (NPD1; 10R,17S-HDHA), both lipid autacoids exhibit anti-inflammatory and neuroprotective properties. Furthermore, it may regulate actin polymerization which is crucial for several biological processes such as the phagocytosis of apoptotic cells. It is also implicated in the generation of endogenous ligands for peroxisome proliferator activated receptor (PPAR-gamma), hence modulating macrophage development and function. It may also exert a negative effect on skeletal development by regulating bone mass through this pathway. As well as participates in ER stress and downstream inflammation in adipocytes, pancreatic islets, and liver. Finally, it is also involved in the cellular response to IL13/interleukin-13. This Homo sapiens (Human) protein is Polyunsaturated fatty acid lipoxygenase ALOX15.